Here is a 517-residue protein sequence, read N- to C-terminus: Crotonobetaine/carnitine--CoA ligase (517 aa).

Belongs to the ATP-dependent AMP-binding enzyme family.

It carries out the reaction 4-(trimethylamino)butanoate + ATP + CoA = 4-(trimethylamino)butanoyl-CoA + AMP + diphosphate. The catalysed reaction is crotonobetaine + ATP + CoA = crotonobetainyl-CoA + AMP + diphosphate. It catalyses the reaction (R)-carnitine + ATP + CoA = (R)-carnitinyl-CoA + AMP + diphosphate. The protein operates within amine and polyamine metabolism; carnitine metabolism. Functionally, catalyzes the transfer of CoA to carnitine, generating the initial carnitinyl-CoA needed for the CaiB reaction cycle. Also has activity toward crotonobetaine and gamma-butyrobetaine. The polypeptide is Crotonobetaine/carnitine--CoA ligase (Escherichia coli O7:K1 (strain IAI39 / ExPEC)).